The sequence spans 377 residues: tRNA-queuosine alpha-mannosyltransferase (377 aa).

Belongs to the glycosyltransferase group 1 family. Glycosyltransferase 4 subfamily.

The enzyme catalyses queuosine(34) in tRNA(Asp) + GDP-alpha-D-mannose = O-4''-alpha-D-mannosylqueuosine(34) in tRNA(Asp) + GDP + H(+). Its function is as follows. Glycosyltransferase that specifically catalyzes mannosylation of cytoplasmic tRNA(Asp) modified with queuosine at position 34 (queuosine(34)). Mannosylates the cyclopentene moiety of queuosine(34) in tRNA(Asp) to form mannosyl-queuosine(34). In Drosophila melanogaster (Fruit fly), this protein is tRNA-queuosine alpha-mannosyltransferase.